Consider the following 254-residue polypeptide: 5-oxoprolinase subunit A (254 aa).

It belongs to the LamB/PxpA family. As to quaternary structure, forms a complex composed of PxpA, PxpB and PxpC.

The enzyme catalyses 5-oxo-L-proline + ATP + 2 H2O = L-glutamate + ADP + phosphate + H(+). Functionally, catalyzes the cleavage of 5-oxoproline to form L-glutamate coupled to the hydrolysis of ATP to ADP and inorganic phosphate. In Burkholderia ambifaria (strain MC40-6), this protein is 5-oxoprolinase subunit A.